The chain runs to 397 residues: Phosphoglycerate kinase (397 aa).

Substrate contacts are provided by residues aspartate 21–asparagine 23, arginine 36, histidine 59–arginine 62, arginine 118, and arginine 151. ATP-binding positions include lysine 201, glutamate 323, and glycine 353–threonine 356.

It belongs to the phosphoglycerate kinase family. In terms of assembly, monomer.

It is found in the cytoplasm. It catalyses the reaction (2R)-3-phosphoglycerate + ATP = (2R)-3-phospho-glyceroyl phosphate + ADP. Its pathway is carbohydrate degradation; glycolysis; pyruvate from D-glyceraldehyde 3-phosphate: step 2/5. This is Phosphoglycerate kinase from Bartonella henselae (strain ATCC 49882 / DSM 28221 / CCUG 30454 / Houston 1) (Rochalimaea henselae).